We begin with the raw amino-acid sequence, 380 residues long: Queuine tRNA-ribosyltransferase (380 aa).

The active-site Proton acceptor is the aspartate 93. Substrate is bound by residues 93–97 (DSGGF), aspartate 147, glutamine 198, and glycine 225. The interval 256–262 (GVGLPSN) is RNA binding. Aspartate 275 serves as the catalytic Nucleophile. Residues 280 to 284 (ARNGR) are RNA binding; important for wobble base 34 recognition. Residues cysteine 313, cysteine 315, cysteine 318, and histidine 344 each contribute to the Zn(2+) site.

Belongs to the queuine tRNA-ribosyltransferase family. As to quaternary structure, homodimer. Within each dimer, one monomer is responsible for RNA recognition and catalysis, while the other monomer binds to the replacement base PreQ1. Zn(2+) serves as cofactor.

The enzyme catalyses 7-aminomethyl-7-carbaguanine + guanosine(34) in tRNA = 7-aminomethyl-7-carbaguanosine(34) in tRNA + guanine. The protein operates within tRNA modification; tRNA-queuosine biosynthesis. In terms of biological role, catalyzes the base-exchange of a guanine (G) residue with the queuine precursor 7-aminomethyl-7-deazaguanine (PreQ1) at position 34 (anticodon wobble position) in tRNAs with GU(N) anticodons (tRNA-Asp, -Asn, -His and -Tyr). Catalysis occurs through a double-displacement mechanism. The nucleophile active site attacks the C1' of nucleotide 34 to detach the guanine base from the RNA, forming a covalent enzyme-RNA intermediate. The proton acceptor active site deprotonates the incoming PreQ1, allowing a nucleophilic attack on the C1' of the ribose to form the product. After dissociation, two additional enzymatic reactions on the tRNA convert PreQ1 to queuine (Q), resulting in the hypermodified nucleoside queuosine (7-(((4,5-cis-dihydroxy-2-cyclopenten-1-yl)amino)methyl)-7-deazaguanosine). The chain is Queuine tRNA-ribosyltransferase from Clostridium perfringens (strain ATCC 13124 / DSM 756 / JCM 1290 / NCIMB 6125 / NCTC 8237 / Type A).